We begin with the raw amino-acid sequence, 529 residues long: Bifunctional purine biosynthesis protein PurH (529 aa).

An MGS-like domain is found at 2–149 (TDLSPVRRAL…KNHAFVNVVV (148 aa)).

Belongs to the PurH family.

The catalysed reaction is (6R)-10-formyltetrahydrofolate + 5-amino-1-(5-phospho-beta-D-ribosyl)imidazole-4-carboxamide = 5-formamido-1-(5-phospho-D-ribosyl)imidazole-4-carboxamide + (6S)-5,6,7,8-tetrahydrofolate. It carries out the reaction IMP + H2O = 5-formamido-1-(5-phospho-D-ribosyl)imidazole-4-carboxamide. Its pathway is purine metabolism; IMP biosynthesis via de novo pathway; 5-formamido-1-(5-phospho-D-ribosyl)imidazole-4-carboxamide from 5-amino-1-(5-phospho-D-ribosyl)imidazole-4-carboxamide (10-formyl THF route): step 1/1. The protein operates within purine metabolism; IMP biosynthesis via de novo pathway; IMP from 5-formamido-1-(5-phospho-D-ribosyl)imidazole-4-carboxamide: step 1/1. This Ruegeria pomeroyi (strain ATCC 700808 / DSM 15171 / DSS-3) (Silicibacter pomeroyi) protein is Bifunctional purine biosynthesis protein PurH.